The sequence spans 360 residues: A-type ATP synthase subunit C (360 aa).

The interval 1–23 (MRLLERLWGKKPSRKSDKKKKGT) is disordered. Residues 9–22 (GKKPSRKSDKKKKG) are compositionally biased toward basic residues.

This sequence belongs to the V-ATPase V0D/AC39 subunit family. Has multiple subunits with at least A(3), B(3), C, D, E, F, H, I and proteolipid K(x).

Its subcellular location is the cell membrane. In terms of biological role, component of the A-type ATP synthase that produces ATP from ADP in the presence of a proton gradient across the membrane. The protein is A-type ATP synthase subunit C of Methanosarcina acetivorans (strain ATCC 35395 / DSM 2834 / JCM 12185 / C2A).